We begin with the raw amino-acid sequence, 426 residues long: N-formyl-4-amino-5-aminomethyl-2-methylpyrimidine deformylase (426 aa).

Residues M1–T31 adopt a coiled-coil conformation. H89 contributes to the Zn(2+) binding site. Residue D91 is part of the active site. D122 lines the Zn(2+) pocket. E156 serves as the catalytic Proton acceptor. Positions 157, 180, and 394 each coordinate Zn(2+).

Belongs to the peptidase M20A family. The cofactor is Zn(2+). Requires Co(2+) as cofactor.

The enzyme catalyses N-formyl-4-amino-5-aminomethyl-2-methylpyrimidine + H2O = 4-amino-5-aminomethyl-2-methylpyrimidine + formate. Its pathway is cofactor biosynthesis; thiamine diphosphate biosynthesis. Functionally, catalyzes the deformylation of the formylaminopyrimidine N-formyl-4-amino-5-aminomethyl-2-methylpyrimidine (FAMP) to give the corresponding aminopyrimidine. The chain is N-formyl-4-amino-5-aminomethyl-2-methylpyrimidine deformylase from Bacillus subtilis (strain 168).